The primary structure comprises 304 residues: Oxygen-dependent coproporphyrinogen-III oxidase (304 aa).

Serine 94 lines the substrate pocket. Residues histidine 98 and histidine 108 each coordinate a divalent metal cation. The Proton donor role is filled by histidine 108. A substrate-binding site is contributed by 110 to 112 (NVR). Positions 147 and 177 each coordinate a divalent metal cation. Positions 242–277 (YVEFNLVYDRGTLFGLQTGGRTESILMSMPPLVRWE) are important for dimerization. 260–262 (GGR) contacts substrate.

It belongs to the aerobic coproporphyrinogen-III oxidase family. In terms of assembly, homodimer. The cofactor is a divalent metal cation.

It is found in the cytoplasm. It carries out the reaction coproporphyrinogen III + O2 + 2 H(+) = protoporphyrinogen IX + 2 CO2 + 2 H2O. The protein operates within porphyrin-containing compound metabolism; protoporphyrin-IX biosynthesis; protoporphyrinogen-IX from coproporphyrinogen-III (O2 route): step 1/1. In terms of biological role, involved in the heme biosynthesis. Catalyzes the aerobic oxidative decarboxylation of propionate groups of rings A and B of coproporphyrinogen-III to yield the vinyl groups in protoporphyrinogen-IX. In Shewanella piezotolerans (strain WP3 / JCM 13877), this protein is Oxygen-dependent coproporphyrinogen-III oxidase.